We begin with the raw amino-acid sequence, 601 residues long: ATP-dependent lipid A-core flippase (601 aa).

4 consecutive transmembrane segments (helical) span residues 26–46 (VGLFAVSILGYVIFASSQPML), 82–102 (LMIVLIAAWQGLGGYLGNYFL), 167–187 (VFLFAYLLWMNWRLTLVMVAI), and 263–283 (VYTPTLQLVTYSAMAVVLFLV). Residues 30–321 (AVSILGYVIF…LSEVSSTIQR (292 aa)) enclose the ABC transmembrane type-1 domain. The region spanning 353 to 589 (IEVRDLSFRY…GGHYARLHAM (237 aa)) is the ABC transporter domain. 387-394 (GRSGSGKS) lines the ATP pocket.

Belongs to the ABC transporter superfamily. Lipid exporter (TC 3.A.1.106) family. Homodimer.

The protein resides in the cell inner membrane. The catalysed reaction is ATP + H2O + lipid A-core oligosaccharideSide 1 = ADP + phosphate + lipid A-core oligosaccharideSide 2.. In terms of biological role, involved in lipopolysaccharide (LPS) biosynthesis. Translocates lipid A-core from the inner to the outer leaflet of the inner membrane. Transmembrane domains (TMD) form a pore in the inner membrane and the ATP-binding domain (NBD) is responsible for energy generation. The protein is ATP-dependent lipid A-core flippase of Aromatoleum aromaticum (strain DSM 19018 / LMG 30748 / EbN1) (Azoarcus sp. (strain EbN1)).